The primary structure comprises 809 residues: Interleukin-4 receptor subunit alpha (809 aa).

The signal sequence occupies residues 1-25; that stretch reads MGCLCPGLTLPVSCLILVWAAGSGS. The Extracellular segment spans residues 26 to 231; that stretch reads VKVLRLTACF…NYYEQPLEQR (206 aa). Cys34 and Cys44 form a disulfide bridge. Asn53 and Asn71 each carry an N-linked (GlcNAc...) asparagine glycan. A disulfide bridge connects residues Cys74 and Cys86. Residues Asn112, Asn128, and Asn161 are each glycosylated (N-linked (GlcNAc...) asparagine). The 98-residue stretch at 125 to 222 folds into the Fibronectin type-III domain; the sequence is APQNLTVHAI…EWSPSTTWHN (98 aa). The residue at position 163 (Ser163) is a Phosphoserine. N-linked (GlcNAc...) asparagine glycosylation is found at Asn175 and Asn208. Residues 211–215 carry the WSXWS motif motif; the sequence is WSEWS. Residues 232–255 form a helical membrane-spanning segment; it reads LPLGVSISCVVILAICLSCYFSII. Residues 256 to 809 are Cytoplasmic-facing; the sequence is KIKKEWWDQI…STGPTCTSAS (554 aa). A Box 1 motif motif is present at residues 261-269; sequence WWDQIPNPA. Disordered regions lie at residues 369 to 397 and 441 to 468; these read ESEEEEVEEDRGSFCPSPESSGSGFQEGR and SAGPQEAASQGEEQPLNPESNPLATLTQ. Residues 447-468 show a composition bias toward polar residues; that stretch reads AASQGEEQPLNPESNPLATLTQ. Tyr488 bears the Phosphotyrosine mark. The segment at 514 to 536 is disordered; that stretch reads LGQVDPSIPSAPQPSEPPTALQP. Residues Tyr566, Tyr590, and Tyr618 each carry the phosphotyrosine modification. A disordered region spans residues 606-674; the sequence is QSGVEASSGE…EPTVKGEDPR (69 aa). Residues 695–700 carry the ITIM motif motif; it reads IVYSAL.

Belongs to the type I cytokine receptor family. Type 4 subfamily. In terms of assembly, the functional IL4 receptor is formed by initial binding of IL4 to IL4R. Subsequent recruitment to the complex of the common gamma chain, in immune cells, creates a type I receptor and, in non-immune cells, of IL13RA1 forms a type II receptor. IL4R can also interact with the IL13/IL13RA1 complex to form a similar type II receptor. Interacts with PIK3C3. Interacts with the SH2-containing phosphatases, PTPN6/SHIP1, PTPN11/SHIP2 and INPP5D/SHIP. Interacts with JAK1 through a Box 1-containing region; inhibited by SOCS5. Interacts with SOCS5; inhibits IL4 signaling. Interacts with JAK3. Interacts with CLM1. Interacts with IL13RA2. In terms of processing, on IL4 binding, phosphorylated on tyrosine residues in the cytoplasmic domain.

The protein resides in the cell membrane. It localises to the secreted. In terms of biological role, receptor for both interleukin 4 and interleukin 13. Couples to the JAK1/2/3-STAT6 pathway. The IL4 response is involved in promoting Th2 differentiation. The IL4/IL13 responses are involved in regulating IgE production and, chemokine and mucus production at sites of allergic inflammation. In certain cell types, can signal through activation of insulin receptor substrates, IRS1/IRS2. In Equus caballus (Horse), this protein is Interleukin-4 receptor subunit alpha (IL4R).